The sequence spans 86 residues: Elicitor peptide 5 (86 aa).

A propeptide spanning residues 1-59 (MQQERDHKRDCCKLMPQTVKAFFKCLRFRRSSSSSSDMVKARARNEEKEEPSSIETSTR) is cleaved from the precursor. The interval 31–86 (SSSSSSDMVKARARNEEKEEPSSIETSTRSLNVMRKGIRKQPVSSGKRGGVNDYDM) is disordered. Over residues 39 to 51 (VKARARNEEKEEP) the composition is skewed to basic and acidic residues.

The protein belongs to the brassicaceae elicitor peptide family.

Elicitor of plant defense. The protein is Elicitor peptide 5 (PEP5) of Arabidopsis thaliana (Mouse-ear cress).